A 510-amino-acid polypeptide reads, in one-letter code: Chromosomal replication initiator protein DnaA (510 aa).

The domain I, interacts with DnaA modulators stretch occupies residues 1–87; sequence MSVELWQQCV…IGSRRSSAPR (87 aa). A domain II region spans residues 87-173; the sequence is RAAPNAPVSA…QVEGALKHTS (87 aa). The disordered stretch occupies residues 140–160; sequence DSFDAMAEPASAPASSGRAEQ. A compositionally biased stretch (low complexity) spans 144–157; the sequence is AMAEPASAPASSGR. The segment at 174–390 is domain III, AAA+ region; it reads YLNRTFTFDT…GALKRVIAHS (217 aa). Residues Gly218, Gly220, Lys221, and Thr222 each coordinate ATP. A domain IV, binds dsDNA region spans residues 391–510; the sequence is HFMGRDITIE…YKNLLRTLTT (120 aa).

It belongs to the DnaA family. In terms of assembly, oligomerizes as a right-handed, spiral filament on DNA at oriC.

Its subcellular location is the cytoplasm. Plays an essential role in the initiation and regulation of chromosomal replication. ATP-DnaA binds to the origin of replication (oriC) to initiate formation of the DNA replication initiation complex once per cell cycle. Binds the DnaA box (a 9 base pair repeat at the origin) and separates the double-stranded (ds)DNA. Forms a right-handed helical filament on oriC DNA; dsDNA binds to the exterior of the filament while single-stranded (ss)DNA is stabiized in the filament's interior. The ATP-DnaA-oriC complex binds and stabilizes one strand of the AT-rich DNA unwinding element (DUE), permitting loading of DNA polymerase. After initiation quickly degrades to an ADP-DnaA complex that is not apt for DNA replication. Binds acidic phospholipids. In Pseudomonas putida (strain GB-1), this protein is Chromosomal replication initiator protein DnaA.